A 1357-amino-acid polypeptide reads, in one-letter code: DNA-directed RNA polymerase subunit beta (1357 aa).

This sequence belongs to the RNA polymerase beta chain family. As to quaternary structure, the RNAP catalytic core consists of 2 alpha, 1 beta, 1 beta' and 1 omega subunit. When a sigma factor is associated with the core the holoenzyme is formed, which can initiate transcription.

The enzyme catalyses RNA(n) + a ribonucleoside 5'-triphosphate = RNA(n+1) + diphosphate. DNA-dependent RNA polymerase catalyzes the transcription of DNA into RNA using the four ribonucleoside triphosphates as substrates. The chain is DNA-directed RNA polymerase subunit beta from Pseudomonas aeruginosa (strain ATCC 15692 / DSM 22644 / CIP 104116 / JCM 14847 / LMG 12228 / 1C / PRS 101 / PAO1).